We begin with the raw amino-acid sequence, 180 residues long: Large ribosomal subunit protein uL6 (180 aa).

This sequence belongs to the universal ribosomal protein uL6 family. In terms of assembly, part of the 50S ribosomal subunit.

In terms of biological role, this protein binds to the 23S rRNA, and is important in its secondary structure. It is located near the subunit interface in the base of the L7/L12 stalk, and near the tRNA binding site of the peptidyltransferase center. This chain is Large ribosomal subunit protein uL6, found in Clostridium tetani (strain Massachusetts / E88).